Reading from the N-terminus, the 203-residue chain is Recombination protein RecR (203 aa).

A C4-type zinc finger spans residues 56–71; it reads CAVCGNVSDDERCRIC. Positions 79–179 constitute a Toprim domain; the sequence is ALVCVVEEPK…TVTRIASGLP (101 aa).

Belongs to the RecR family.

In terms of biological role, may play a role in DNA repair. It seems to be involved in an RecBC-independent recombinational process of DNA repair. It may act with RecF and RecO. The sequence is that of Recombination protein RecR from Mycobacterium ulcerans (strain Agy99).